A 269-amino-acid chain; its full sequence is tRNA pseudouridine synthase A (269 aa).

The Nucleophile role is filled by D51. Y109 is a binding site for substrate.

It belongs to the tRNA pseudouridine synthase TruA family. In terms of assembly, homodimer.

It catalyses the reaction uridine(38/39/40) in tRNA = pseudouridine(38/39/40) in tRNA. In terms of biological role, formation of pseudouridine at positions 38, 39 and 40 in the anticodon stem and loop of transfer RNAs. The polypeptide is tRNA pseudouridine synthase A (Aeromonas salmonicida (strain A449)).